A 106-amino-acid chain; its full sequence is UPF0145 protein Dhaf_3855 (106 aa).

This sequence belongs to the UPF0145 family.

In Desulfitobacterium hafniense (strain DSM 10664 / DCB-2), this protein is UPF0145 protein Dhaf_3855.